A 205-amino-acid polypeptide reads, in one-letter code: Large ribosomal subunit protein uL4 (205 aa).

Residues 44–77 (KRQGTSKVKNRSAVRGGGKKPWRQKGTGRARQGS) form a disordered region. Basic residues predominate over residues 51–71 (VKNRSAVRGGGKKPWRQKGTG).

This sequence belongs to the universal ribosomal protein uL4 family. As to quaternary structure, part of the 50S ribosomal subunit.

Functionally, one of the primary rRNA binding proteins, this protein initially binds near the 5'-end of the 23S rRNA. It is important during the early stages of 50S assembly. It makes multiple contacts with different domains of the 23S rRNA in the assembled 50S subunit and ribosome. In terms of biological role, forms part of the polypeptide exit tunnel. In Lactobacillus delbrueckii subsp. bulgaricus (strain ATCC 11842 / DSM 20081 / BCRC 10696 / JCM 1002 / NBRC 13953 / NCIMB 11778 / NCTC 12712 / WDCM 00102 / Lb 14), this protein is Large ribosomal subunit protein uL4.